We begin with the raw amino-acid sequence, 287 residues long: MRGRSYTPSPPRGYGRRGRSPSPRGRYGGRSRDLPTSLLVRNLRHDCRQEDLRKSFEQFGPVKDIYLPRDYYTGDPRGFGFVQFMDPADAADAKHHMDGYLLLGRELTVVFAEENRKKPTEMRARERGGGRFRDRRRTPPRYYSRSRSPPPRRGRSRSRSGDYYSPPPRRHHPRSISPREERYDGRRSYSRSPASDGSRGRSLTPVRGKSRSLSPSPRRSISRSPRRSRSPSPKRNRSVSPRRSISRSPRRSRSPRRSRRSYTPEPARSRSQSPHGGQYDEDRSPSQ.

The tract at residues 1-34 is disordered; sequence MRGRSYTPSPPRGYGRRGRSPSPRGRYGGRSRDL. Residues S9 and S20 each carry the phosphoserine modification. One can recognise an RRM domain in the interval 36-114; sequence TSLLVRNLRH…RELTVVFAEE (79 aa). Basic and acidic residues predominate over residues 116-132; it reads RKKPTEMRARERGGGRF. Residues 116 to 287 form a disordered region; it reads RKKPTEMRAR…QYDEDRSPSQ (172 aa). Phosphoserine is present on residues S165, S175, S177, S188, and S190. The span at 177–187 shows a compositional bias: basic and acidic residues; sequence SPREERYDGRR. Positions 220–237 are enriched in basic residues; the sequence is SISRSPRRSRSPSPKRNR. Residues S238, S248, S271, S284, and S286 each carry the phosphoserine modification. The span at 244-260 shows a compositional bias: basic residues; sequence SISRSPRRSRSPRRSRR. Residues 278-287 are compositionally biased toward basic and acidic residues; the sequence is QYDEDRSPSQ.

It belongs to the splicing factor SR family. SCL subfamily. Component of the spliceosome. Homodimer. Interacts with AFC2, CYP59, RS2Z33, RNU1 and SR45. The interaction with AFC2 depends on phosphorylation status. Post-translationally, phosphorylated by AFC2. In terms of tissue distribution, ubiquitous. Mostly expressed in roots, fruits and flowers, and, to a lower extent, in leaves.

Its subcellular location is the nucleus speckle. It is found in the nucleus. It localises to the nucleoplasm. The protein localises to the cytoplasm. Functionally, involved in intron recognition and spliceosome assembly. Binds to multiple 5'-GAAG-3' repeats found in its third intron, suggesting autoregulation of alternative splicing. May be necessary for accurate splicing of the 3' region of introns. The polypeptide is Serine/arginine-rich SC35-like splicing factor SCL33 (SCL33) (Arabidopsis thaliana (Mouse-ear cress)).